The sequence spans 303 residues: UDP-3-O-acyl-N-acetylglucosamine deacetylase (303 aa).

Histidine 78, histidine 237, and aspartate 241 together coordinate Zn(2+). The active-site Proton donor is the histidine 264.

The protein belongs to the LpxC family. The cofactor is Zn(2+).

It catalyses the reaction a UDP-3-O-[(3R)-3-hydroxyacyl]-N-acetyl-alpha-D-glucosamine + H2O = a UDP-3-O-[(3R)-3-hydroxyacyl]-alpha-D-glucosamine + acetate. Its pathway is glycolipid biosynthesis; lipid IV(A) biosynthesis; lipid IV(A) from (3R)-3-hydroxytetradecanoyl-[acyl-carrier-protein] and UDP-N-acetyl-alpha-D-glucosamine: step 2/6. In terms of biological role, catalyzes the hydrolysis of UDP-3-O-myristoyl-N-acetylglucosamine to form UDP-3-O-myristoylglucosamine and acetate, the committed step in lipid A biosynthesis. The protein is UDP-3-O-acyl-N-acetylglucosamine deacetylase of Pseudomonas paraeruginosa (strain DSM 24068 / PA7) (Pseudomonas aeruginosa (strain PA7)).